Consider the following 1824-residue polypeptide: Afadin (1824 aa).

Residues 39–133 (FHGVMRFYFQ…GRFVLKNEND (95 aa)) form the Ras-associating 1 domain. Positions 128-194 (LKNENDAIPP…DRPFQGEDVE (67 aa)) are disordered. The stretch at 146-185 (EKQEKEGVIQNFKRTLSKKEKKEKKKREKEALRQASDKDD) forms a coiled coil. Residues 160–172 (TLSKKEKKEKKKR) are compositionally biased toward basic residues. The segment covering 173–189 (EKEALRQASDKDDRPFQ) has biased composition (basic and acidic residues). 3 positions are modified to phosphoserine: serine 216, serine 246, and serine 256. The region spanning 246–348 (SGGTLRIYAD…LVFQLKRRPP (103 aa)) is the Ras-associating 2 domain. Positions 349 to 371 (DHIPKKTKKHLEGKTPKGKERAD) are enriched in basic and acidic residues. Residues 349–378 (DHIPKKTKKHLEGKTPKGKERADGSGYGST) are disordered. Serine 391 and serine 424 each carry phosphoserine. Positions 426-492 (TEVGTEKLDD…LQSGMKVQFG (67 aa)) constitute an FHA domain. Serine 512, serine 557, serine 562, serine 589, and serine 655 each carry phosphoserine. The segment at 534-595 (FDLGGDIHSG…RQESRTQDAS (62 aa)) is disordered. The segment covering 580-591 (QQPDYRRQESRT) has biased composition (basic and acidic residues). The Dilute domain maps to 668 to 908 (NKMVSMMEGV…IENVVTVAEN (241 aa)). The PDZ domain maps to 1007–1093 (IITVTLKKQN…VVTLEVAKQG (87 aa)). 9 positions are modified to phosphoserine: serine 1083, serine 1107, serine 1126, serine 1140, serine 1143, serine 1172, serine 1173, serine 1182, and serine 1199. The tract at residues 1107-1223 (SPMMQRISDR…PRPEAYPIPT (117 aa)) is disordered. Basic and acidic residues predominate over residues 1113 to 1128 (ISDRRGSGKPRPKSEG). Polar residues predominate over residues 1132–1143 (YNNSTQNGSPES). Over residues 1152–1172 (SEPKKLPGDDRLMKNRADHRS) the composition is skewed to basic and acidic residues. Polar residues predominate over residues 1190–1210 (ASGTTAKITSVSTGNLCTEEQ). Threonine 1211 and threonine 1232 each carry phosphothreonine. 3 disordered regions span residues 1235 to 1473 (ASKS…LQRP), 1501 to 1528 (SKEE…EKQQ), and 1569 to 1824 (RLQE…LNTK). Residue serine 1238 is modified to Phosphoserine. Composition is skewed to basic and acidic residues over residues 1252 to 1262 (YEEKPHMHTDS) and 1274 to 1302 (RSQE…KSDS). Serine 1275 is modified (phosphoserine). Residues 1309–1318 (SSSLDSSTSS) are compositionally biased toward low complexity. The segment covering 1325-1337 (SSKSVTPASTLTK) has biased composition (polar residues). Residue serine 1328 is modified to Phosphoserine. Threonine 1330 carries the phosphothreonine modification. Residues 1345–1356 (TPAAIPATPVAV) are compositionally biased toward low complexity. Residues 1364–1373 (LPPPPPPPPV) show a composition bias toward pro residues. Residues 1407-1441 (AERRKREEHQRWYEKEKARLEEERERKRREQERKL) are compositionally biased toward basic and acidic residues. Positions 1408–1448 (ERRKREEHQRWYEKEKARLEEERERKRREQERKLGQMRTQS) form a coiled coil. Phosphoserine is present on residues serine 1501 and serine 1512. Positions 1515–1528 (PWKRDAKEKLEKQQ) are enriched in basic and acidic residues. A coiled-coil region spans residues 1523 to 1667 (KLEKQQQMHI…SRLEAERRRQ (145 aa)). The segment covering 1578-1589 (EDDEEEEDDDVD) has biased composition (acidic residues). Basic and acidic residues predominate over residues 1597-1677 (LEAERRARLQ…HDEAARRLLE (81 aa)). Pro residues predominate over residues 1694–1709 (PPSPSPAPGAPPPPPQ). 5 positions are modified to phosphoserine: serine 1696, serine 1721, serine 1774, serine 1779, and serine 1799. Basic and acidic residues predominate over residues 1762–1776 (DACRDAKEKRSKSQD). At lysine 1807 the chain carries N6-acetyllysine. The segment covering 1813-1824 (KLTELENELNTK) has biased composition (basic and acidic residues).

As to quaternary structure, homodimer. Interacts with F-actin, nectin and NECTIN3. Essential for the association of nectin and E-cadherin. Isoform 1/s-afadin does not interact with F-actin. Interacts with ZO-1 and occludin, but probably in an indirect manner. Interacts with RIT1 and RIT2. Interacts with NRXN1 and BCR. Interacts with ADAM10; the interaction locks ADAM10 at adherens junctions following ADAM10 recruitment to adherens junctions by TSPAN33.

It is found in the cell junction. The protein resides in the adherens junction. Functionally, belongs to an adhesion system, probably together with the E-cadherin-catenin system, which plays a role in the organization of homotypic, interneuronal and heterotypic cell-cell adherens junctions (AJs). Nectin- and actin-filament-binding protein that connects nectin to the actin cytoskeleton. May play a key role in the organization of epithelial structures of the embryonic ectoderm. Essential for the organization of adherens junctions. This chain is Afadin, found in Homo sapiens (Human).